A 107-amino-acid chain; its full sequence is NADH dehydrogenase [ubiquinone] 1 beta subcomplex subunit 10-A (107 aa).

The segment at methionine 1–proline 23 is disordered.

It belongs to the complex I NDUFB10 subunit family. Complex I is composed of at least 49 different subunits.

It is found in the mitochondrion inner membrane. Accessory subunit of the mitochondrial membrane respiratory chain NADH dehydrogenase (Complex I), that is believed not to be involved in catalysis. Complex I functions in the transfer of electrons from NADH to the respiratory chain. The immediate electron acceptor for the enzyme is believed to be ubiquinone. The sequence is that of NADH dehydrogenase [ubiquinone] 1 beta subcomplex subunit 10-A from Arabidopsis thaliana (Mouse-ear cress).